A 419-amino-acid polypeptide reads, in one-letter code: Methyltransferase/ribosomally synthesized type I borosin cyclic peptide precursor gjuMa (419 aa).

Residues 1–255 (MATPIATTTN…AISTLYVPPR (255 aa)) are methyltransferase domain. Residues R79, Y83, and Y105 contribute to the active site. S-adenosyl-L-methionine contacts are provided by Y105, H107, V110, A137, Q179, G217, S248, and T249. Residues 256-381 (DISPVDPTMA…GAVYALMSRP (126 aa)) form a clasp domain region. The tract at residues 382–404 (TGDIAREKELTNDEIANNHGAPY) is precursor leader. N-methylserine is present on S408. N-methylalanine is present on A409. The residue at position 410 (V410) is an N-methylvaline. I411 and I412 each carry N-methylisoleucine. N-methylalanine occurs at positions 413 and 414. N-methylisoleucine is present on residues I415 and I416.

In the N-terminal section; belongs to the precorrin methyltransferase family. In terms of assembly, homodimer. Post-translationally, gjuMA automethylates at Ser-408, Ala-409, Val-410, Ile-411, Ile-412, Ala-413, Ala-414, Ile-415 and Ile-416 before being processed by ae prolyloligopeptidase which likely forms a peptidyl ester upon removal of the follower propeptide, which then undergoes macrocyclization with the N-terminus of the modified core peptide. Peptide backbone alpha-N-methylations change the physicochemical properties of amide bonds to provide structural constraints and other favorable characteristics including biological membrane permeability to peptides.

The protein operates within secondary metabolite biosynthesis. Its function is as follows. Fusion protein of the methyltransferase gjuM and the type I borosin core peptide; part of the gene cluster that mediates the biosynthesis of a type I borosin, a highly methylated cyclic peptide with potent biological activities. Type I borosins derive from the C-terminus of the fusion protein, and it is the same protein that methylates its own C-terminus using S-adenosyl methionine (SAM). The C-terminus is subsequently cleaved off and macrocyclized by a prolyloligopeptidase to give the final product. In Gymnopilus junonius (Spectacular rustgill mushroom), this protein is Methyltransferase/ribosomally synthesized type I borosin cyclic peptide precursor gjuMa.